The primary structure comprises 247 residues: 1-(5-phosphoribosyl)-5-[(5-phosphoribosylamino)methylideneamino] imidazole-4-carboxamide isomerase (247 aa).

Aspartate 8 serves as the catalytic Proton acceptor. Aspartate 129 acts as the Proton donor in catalysis.

It belongs to the HisA/HisF family.

It localises to the cytoplasm. It carries out the reaction 1-(5-phospho-beta-D-ribosyl)-5-[(5-phospho-beta-D-ribosylamino)methylideneamino]imidazole-4-carboxamide = 5-[(5-phospho-1-deoxy-D-ribulos-1-ylimino)methylamino]-1-(5-phospho-beta-D-ribosyl)imidazole-4-carboxamide. The protein operates within amino-acid biosynthesis; L-histidine biosynthesis; L-histidine from 5-phospho-alpha-D-ribose 1-diphosphate: step 4/9. In Solidesulfovibrio magneticus (strain ATCC 700980 / DSM 13731 / RS-1) (Desulfovibrio magneticus), this protein is 1-(5-phosphoribosyl)-5-[(5-phosphoribosylamino)methylideneamino] imidazole-4-carboxamide isomerase.